The primary structure comprises 202 residues: Small ribosomal subunit protein uS4 (202 aa).

One can recognise an S4 RNA-binding domain in the interval 93-155 (RRLDNVVRRV…ENLKNLYRGV (63 aa)).

Belongs to the universal ribosomal protein uS4 family. Part of the 30S ribosomal subunit. Contacts protein S5. The interaction surface between S4 and S5 is involved in control of translational fidelity.

In terms of biological role, one of the primary rRNA binding proteins, it binds directly to 16S rRNA where it nucleates assembly of the body of the 30S subunit. Its function is as follows. With S5 and S12 plays an important role in translational accuracy. This is Small ribosomal subunit protein uS4 from Rhodopirellula baltica (strain DSM 10527 / NCIMB 13988 / SH1).